The chain runs to 139 residues: Large ribosomal subunit protein uL13 (139 aa).

This sequence belongs to the universal ribosomal protein uL13 family. In terms of assembly, part of the 50S ribosomal subunit.

This protein is one of the early assembly proteins of the 50S ribosomal subunit, although it is not seen to bind rRNA by itself. It is important during the early stages of 50S assembly. In Wolinella succinogenes (strain ATCC 29543 / DSM 1740 / CCUG 13145 / JCM 31913 / LMG 7466 / NCTC 11488 / FDC 602W) (Vibrio succinogenes), this protein is Large ribosomal subunit protein uL13.